Reading from the N-terminus, the 336-residue chain is MTLDLNKLRFGSELIKRGFSAMTKGGVIMDVTTADQAKIAEAAGAVAVMALERVPADIRAAGGVARMADPMKIKEIMDAVSIPVMAKVRIGHISEAYVLEKIGVDMLDESEVLTPADPFFHLYKKNLTVPVVSGARNLPEAVRRIFEGAAMIRTKGEAGTGNIIEAVRHIRKVNEEISVLKRMSDEQLRAVASNISASYFVLREEASKDLMGVEGKLSYDSAYAGMGRSRIEREILAILRQIRRMGRLPVVNFAAGGVATPADGALMMELGADGVFVGSGIFKSPNPEKMARSIVEAVENYRDYDVVEKASEGLQGMPGVDIESIPKDMRLQERGW.

Position 30 (Asp-30) interacts with D-ribose 5-phosphate. Lys-87 (schiff-base intermediate with D-ribose 5-phosphate) is an active-site residue. Gly-159 contacts D-ribose 5-phosphate. Residue Arg-171 coordinates D-glyceraldehyde 3-phosphate. Residues Gly-257 and 278 to 279 (GS) contribute to the D-ribose 5-phosphate site.

This sequence belongs to the PdxS/SNZ family. In terms of assembly, in the presence of PdxT, forms a dodecamer of heterodimers.

The catalysed reaction is aldehydo-D-ribose 5-phosphate + D-glyceraldehyde 3-phosphate + L-glutamine = pyridoxal 5'-phosphate + L-glutamate + phosphate + 3 H2O + H(+). It participates in cofactor biosynthesis; pyridoxal 5'-phosphate biosynthesis. Functionally, catalyzes the formation of pyridoxal 5'-phosphate from ribose 5-phosphate (RBP), glyceraldehyde 3-phosphate (G3P) and ammonia. The ammonia is provided by the PdxT subunit. Can also use ribulose 5-phosphate and dihydroxyacetone phosphate as substrates, resulting from enzyme-catalyzed isomerization of RBP and G3P, respectively. This is Pyridoxal 5'-phosphate synthase subunit PdxS from Thermoplasma acidophilum (strain ATCC 25905 / DSM 1728 / JCM 9062 / NBRC 15155 / AMRC-C165).